Here is a 125-residue protein sequence, read N- to C-terminus: MAFPTTSAQQAETNRKILEDIQTKKQLLAGGIINLGLSNTNQMPSPQLLGQPTVAPEFLPQGVGLPTNATPPRSAFNPTSSTTLGFFIPQDSYFGNSFIPVLPRLEPLPTTTAPATTTASHIAPK.

A disordered region spans residues 43–77 (MPSPQLLGQPTVAPEFLPQGVGLPTNATPPRSAFN). Positions 67-77 (TNATPPRSAFN) are enriched in polar residues.

It belongs to the SOSS-C family.

The chain is SOSS complex subunit C homolog from Drosophila persimilis (Fruit fly).